Reading from the N-terminus, the 117-residue chain is Large ribosomal subunit protein bL20 (117 aa).

Belongs to the bacterial ribosomal protein bL20 family.

Functionally, binds directly to 23S ribosomal RNA and is necessary for the in vitro assembly process of the 50S ribosomal subunit. It is not involved in the protein synthesizing functions of that subunit. The protein is Large ribosomal subunit protein bL20 of Rickettsia peacockii (strain Rustic).